Here is a 219-residue protein sequence, read N- to C-terminus: Endonuclease III (219 aa).

A HhH domain is found at 117 to 136 (MEELLTLPGVARKTANVVLA). 4 residues coordinate [4Fe-4S] cluster: Cys-197, Cys-204, Cys-207, and Cys-213.

Belongs to the Nth/MutY family. It depends on [4Fe-4S] cluster as a cofactor.

The catalysed reaction is 2'-deoxyribonucleotide-(2'-deoxyribose 5'-phosphate)-2'-deoxyribonucleotide-DNA = a 3'-end 2'-deoxyribonucleotide-(2,3-dehydro-2,3-deoxyribose 5'-phosphate)-DNA + a 5'-end 5'-phospho-2'-deoxyribonucleoside-DNA + H(+). Its function is as follows. DNA repair enzyme that has both DNA N-glycosylase activity and AP-lyase activity. The DNA N-glycosylase activity releases various damaged pyrimidines from DNA by cleaving the N-glycosidic bond, leaving an AP (apurinic/apyrimidinic) site. The AP-lyase activity cleaves the phosphodiester bond 3' to the AP site by a beta-elimination, leaving a 3'-terminal unsaturated sugar and a product with a terminal 5'-phosphate. This chain is Endonuclease III, found in Synechocystis sp. (strain ATCC 27184 / PCC 6803 / Kazusa).